The following is a 402-amino-acid chain: Prophage integrase IntZ (402 aa).

The Core-binding (CB) domain occupies 103–183 (AGFKKVAEDW…RIGEIFKFAV (81 aa)). Positions 206–381 (GHNAWIPISE…AYLKQRRAMM (176 aa)) constitute a Tyr recombinase domain. Active-site residues include Arg244, Lys271, His332, Arg335, and His359. Catalysis depends on Tyr368, which acts as the O-(3'-phospho-DNA)-tyrosine intermediate.

Belongs to the 'phage' integrase family.

Integrase is necessary for integration of the phage into the host genome by site-specific recombination. In conjunction with excisionase, integrase is also necessary for excision of the prophage from the host genome. This Escherichia coli (strain K12) protein is Prophage integrase IntZ (intZ).